A 117-amino-acid polypeptide reads, in one-letter code: Minor capsid protein p17 (117 aa).

N-linked (GlcNAc...) asparagine; by host glycosylation occurs at asparagine 12. The helical transmembrane segment at 39–59 (AIILGILILLVIILIVVAIVY) threads the bilayer. N-linked (GlcNAc...) asparagine; by host glycosylation is found at asparagine 61 and asparagine 98. The segment at 97 to 117 (KNSTTQQHIPSDEQLAELAHS) is disordered.

The protein belongs to the asfivirus minor capsid protein p17 family. In terms of assembly, interacts with the minor capsid protein M1249L and with the hexon capsid protein p72 capsomers; these interactions form a rigid zipper structure that stabilizes the capsomers. Interacts with host STING1.

The protein resides in the virion membrane. The protein localises to the host endoplasmic reticulum membrane. In terms of biological role, together with the penton and the other minor capsid proteins (M1249L, p49), forms a complicated network immediately below the outer capsid shell, stabilizing the whole capsid. Three copies of p17 encircle each p72 capsomer in the inner capsid shell, anchoring p72 capsomers on the inner membrane. Required for the assembly of the capsid and icosahedral morphogenesis. Additionally, inhibits the host cGAS-STING pathway through its interaction with STING1 and subsequent interference of the recruitment of downstream components TBK1 and IKBKE. This chain is Minor capsid protein p17, found in Ornithodoros (relapsing fever ticks).